A 315-amino-acid chain; its full sequence is Putative purine nucleoside phosphorylase (315 aa).

Phosphate-binding positions include Ser-49, His-81, 103–105, and Ala-135; that span reads RYH. Glu-220 provides a ligand contact to a purine D-ribonucleoside. A phosphate-binding site is contributed by Ser-239. Residue Asn-262 participates in a purine D-ribonucleoside binding.

The protein belongs to the PNP/MTAP phosphorylase family.

It is found in the cytoplasm. It localises to the nucleus. It carries out the reaction a purine D-ribonucleoside + phosphate = a purine nucleobase + alpha-D-ribose 1-phosphate. It participates in purine metabolism; purine nucleoside salvage. Its function is as follows. The purine nucleoside phosphorylases catalyze the phosphorolytic breakdown of the N-glycosidic bond in the beta-(deoxy)ribonucleoside molecules, with the formation of the corresponding free purine bases and pentose-1-phosphate. Cleaves guanosine and inosine. The polypeptide is Putative purine nucleoside phosphorylase (Schizosaccharomyces pombe (strain 972 / ATCC 24843) (Fission yeast)).